Consider the following 266-residue polypeptide: Mediator of RNA polymerase II transcription subunit 18 (266 aa).

It belongs to the Mediator complex subunit 18 family. In terms of assembly, component of the Mediator complex.

The protein resides in the nucleus. Component of the Mediator complex, a coactivator involved in the regulated transcription of nearly all RNA polymerase II-dependent genes. Mediator functions as a bridge to convey information from gene-specific regulatory proteins to the basal RNA polymerase II transcription machinery. Mediator is recruited to promoters by direct interactions with regulatory proteins and serves as a scaffold for the assembly of a functional preinitiation complex with RNA polymerase II and the general transcription factors. The sequence is that of Mediator of RNA polymerase II transcription subunit 18 (SRB5) from Candida glabrata (strain ATCC 2001 / BCRC 20586 / JCM 3761 / NBRC 0622 / NRRL Y-65 / CBS 138) (Yeast).